A 524-amino-acid polypeptide reads, in one-letter code: MSTLQGLLDALQHHKLQLLCIGPLVYACVSFIIKIVYRIYFHPLAKFPGPKIAAATHLYEVAWDYFGQGAYLYEIQRMHEKYGPIVRINPIELSVNDPEFYNVLYVGGSVRKTNALPSFGDGMDFNGSHGMTVDHDHHRLRRKPMEPFFSKGSIARLEDRLQELTVTLVQRLHEYRGTGRVLRLDHVFAAMAGDVVNVLCIANPTMSFLRHSDFNPYWYELFHTLIRSMPLFMNFPWVIKIVRLIPTSLLEKLDPRSQMFRDWRMMSVNHIIDAKQRKERGLIFVNEEDKMKCETLFDHIVNSDLPEAELSVERLASEAQVVMGAGTVTTARTMDFLAVRILLNDSVCQRLRDELREPMKDFPERIPSYAELEKLPWLQACIKEALRLSPGLTHRLPRVSPHEELIYKDWVIPRNTPVGMSALFMHMDPLVYKDPTEYRPERWLEDVTPEMHRNYVPFTKGSRRCLGVELSYAEITLVFASLFGPKGPKLKLYETNESDGDPACHFLLPLPRLDSKGIRVTVEA.

The chain crosses the membrane as a helical span at residues 16–36 (LQLLCIGPLVYACVSFIIKIV). N126 and N344 each carry an N-linked (GlcNAc...) asparagine glycan. C465 provides a ligand contact to heme. N-linked (GlcNAc...) asparagine glycosylation occurs at N496.

It belongs to the cytochrome P450 family. Requires heme as cofactor.

It is found in the membrane. Its pathway is mycotoxin biosynthesis. Its function is as follows. Cytochrome P450 monooxygenase; part of the 2 gene clusters that mediate the biosynthesis of fusicoccins, diterpene glucosides that display phytohormone-like activity and function as potent activators of plasma membrane H(+)-ATPases in plants by modifying 14-3-3 proteins and cause the plant disease constriction canker. The first step in the pathway is performed by the fusicoccadiene synthase PaFS that possesses both prenyl transferase and terpene cyclase activity, converting isopentenyl diphosphate and dimethylallyl diphosphate into geranylgeranyl diphosphate (GGDP) and successively converting GGDP into fusicocca-2,10(14)-diene, a precursor for fusicoccin H. The second step is the oxidation at the C-8 position by the cytochrome P450 monooxygenase PaP450-2 to yield fusicocca-2,10(14)-diene-8-beta-ol. The cytochrome P450 monooxygenase PaP450-1 then catalyzes the hydroxylation at the C-16 position to produce fusicocca-2,10(14)-diene-8-beta,16-diol. The dioxygenase fc-dox then catalyzes the 16-oxydation of fusicocca-2,10(14)-diene-8-beta,16-diol to yield an aldehyde (8-beta-hydroxyfusicocca-1,10(14)-dien-16-al). The short-chain dehydrogenase/reductase fc-sdr catalyzes the reduction of the aldehyde to yield fusicocca-1,10(14)-diene-8-beta,16-diol. The next step is the hydroxylation at C-9 performed by the cytochrome P450 monooxygenase PaP450-3 that leads to fusicoccin H aglycon which is glycosylated to fusicoccin H by the O-glycosyltransferase PaGT. Hydroxylation at C-12 by the cytochrome P450 monooxygenase PaP450-4 leads then to the production of fusicoccin Q and is followed by methylation by the O-methyltransferase PaMT to yield fusicoccin P. Fusicoccin P is further converted to fusicoccin J via prenylation by the O-glucose prenyltransferase PaPT. Cytochrome P450 monooxygenase PaP450-5 then performs hydroxylation at C-19 to yield dideacetyl-fusicoccin A which is acetylated to 3'-O-deacetyl-fusicoccin A by the O-acetyltransferase PaAT-2. Finally, a another acetylation by the O-acetyltransferase PaAT-1 yields fusicoccin A. The sequence is that of Fusicoccadiene C-8 hydroxylase from Phomopsis amygdali (Fusicoccum amygdali).